Here is a 499-residue protein sequence, read N- to C-terminus: uncharacterized protein (499 aa).

Disordered regions lie at residues Q76–P118 and D208–N268. A compositionally biased stretch (basic and acidic residues) spans D87–R104. The span at D208–L263 shows a compositional bias: acidic residues. S355 carries the phosphoserine modification. The disordered stretch occupies residues A478–K499. A compositionally biased stretch (polar residues) spans K489–K499.

This is an uncharacterized protein from Arabidopsis thaliana (Mouse-ear cress).